A 215-amino-acid polypeptide reads, in one-letter code: N-(5'-phosphoribosyl)anthranilate isomerase (215 aa).

It belongs to the TrpF family.

The catalysed reaction is N-(5-phospho-beta-D-ribosyl)anthranilate = 1-(2-carboxyphenylamino)-1-deoxy-D-ribulose 5-phosphate. It participates in amino-acid biosynthesis; L-tryptophan biosynthesis; L-tryptophan from chorismate: step 3/5. In Parvibaculum lavamentivorans (strain DS-1 / DSM 13023 / NCIMB 13966), this protein is N-(5'-phosphoribosyl)anthranilate isomerase.